Here is a 197-residue protein sequence, read N- to C-terminus: Imidazoleglycerol-phosphate dehydratase (197 aa).

Belongs to the imidazoleglycerol-phosphate dehydratase family.

Its subcellular location is the cytoplasm. It carries out the reaction D-erythro-1-(imidazol-4-yl)glycerol 3-phosphate = 3-(imidazol-4-yl)-2-oxopropyl phosphate + H2O. Its pathway is amino-acid biosynthesis; L-histidine biosynthesis; L-histidine from 5-phospho-alpha-D-ribose 1-diphosphate: step 6/9. This is Imidazoleglycerol-phosphate dehydratase from Pseudomonas fluorescens (strain SBW25).